Here is a 226-residue protein sequence, read N- to C-terminus: 3-dehydroquinate dehydratase (226 aa).

Residues 33-35 (ELR) and R65 each bind 3-dehydroquinate. Catalysis depends on H120, which acts as the Proton donor/acceptor. Catalysis depends on K147, which acts as the Schiff-base intermediate with substrate. Residues R186, S205, and Q209 each contribute to the 3-dehydroquinate site.

The protein belongs to the type-I 3-dehydroquinase family. Homodimer.

It catalyses the reaction 3-dehydroquinate = 3-dehydroshikimate + H2O. It functions in the pathway metabolic intermediate biosynthesis; chorismate biosynthesis; chorismate from D-erythrose 4-phosphate and phosphoenolpyruvate: step 3/7. In terms of biological role, involved in the third step of the chorismate pathway, which leads to the biosynthesis of aromatic amino acids. Catalyzes the cis-dehydration of 3-dehydroquinate (DHQ) and introduces the first double bond of the aromatic ring to yield 3-dehydroshikimate. In Thermodesulfovibrio yellowstonii (strain ATCC 51303 / DSM 11347 / YP87), this protein is 3-dehydroquinate dehydratase.